Here is a 318-residue protein sequence, read N- to C-terminus: Methionyl-tRNA formyltransferase (318 aa).

112 to 115 lines the (6S)-5,6,7,8-tetrahydrofolate pocket; sequence SILP.

This sequence belongs to the Fmt family.

It carries out the reaction L-methionyl-tRNA(fMet) + (6R)-10-formyltetrahydrofolate = N-formyl-L-methionyl-tRNA(fMet) + (6S)-5,6,7,8-tetrahydrofolate + H(+). Functionally, attaches a formyl group to the free amino group of methionyl-tRNA(fMet). The formyl group appears to play a dual role in the initiator identity of N-formylmethionyl-tRNA by promoting its recognition by IF2 and preventing the misappropriation of this tRNA by the elongation apparatus. The protein is Methionyl-tRNA formyltransferase of Shewanella sp. (strain W3-18-1).